The primary structure comprises 137 residues: Holo-[acyl-carrier-protein] synthase (137 aa).

D8 and E61 together coordinate Mg(2+).

Belongs to the P-Pant transferase superfamily. AcpS family. Mg(2+) serves as cofactor.

It localises to the cytoplasm. The catalysed reaction is apo-[ACP] + CoA = holo-[ACP] + adenosine 3',5'-bisphosphate + H(+). Its function is as follows. Transfers the 4'-phosphopantetheine moiety from coenzyme A to a Ser of acyl-carrier-protein. The polypeptide is Holo-[acyl-carrier-protein] synthase (Afipia carboxidovorans (strain ATCC 49405 / DSM 1227 / KCTC 32145 / OM5) (Oligotropha carboxidovorans)).